The primary structure comprises 505 residues: Monocarboxylate transporter 10 (505 aa).

Residues 1-14 show a composition bias toward acidic residues; the sequence is MTEPEPTLEQEPTP. The tract at residues 1–64 is disordered; it reads MTEPEPTLEQ…EQKSPEEFEP (64 aa). Topologically, residues 1 to 66 are cytoplasmic; sequence MTEPEPTLEQ…KSPEEFEPPE (66 aa). Positions 15-31 are enriched in pro residues; that stretch reads EPEPTQEPTPEPTPEPE. Residues 32–41 show a composition bias toward acidic residues; sequence PTQEPESEPE. The helical transmembrane segment at 67–87 threads the bilayer; sequence GGWGWVVMLASMWCNGSVFGI. At 88–114 the chain is on the extracellular side; the sequence is QNAFGIMFVYLLNEFGSEHDADLRFKT. The chain crosses the membrane as a helical span at residues 115–135; that stretch reads AWVGSLSMGMIFFCSPIVSVF. At 136-142 the chain is on the cytoplasmic side; it reads TDLLGCR. The helical transmembrane segment at 143-163 threads the bilayer; the sequence is ITAVGGAAVGCVGLLASSFVT. The Extracellular portion of the chain corresponds to 164–171; that stretch reads SLGPMYFT. Residues 172-192 traverse the membrane as a helical segment; sequence YGIVFACGCSFAYQPSLVILG. Topologically, residues 193–204 are cytoplasmic; that stretch reads HYFKRRLGLVNG. Residues 205-225 form a helical membrane-spanning segment; that stretch reads IVTAGSSVFTITLPYMLSGLL. At 226–235 the chain is on the extracellular side; that stretch reads KSVGLYHTLR. A helical transmembrane segment spans residues 236 to 256; sequence VLAIFMFILMLAGLTYKPLLP. The Cytoplasmic portion of the chain corresponds to 257–286; the sequence is KPVSSSKPGSRCPPLSRIFNVNIWKSLGYR. The chain crosses the membrane as a helical span at residues 287-307; the sequence is IWAFGIPAALYGYFVPYVHLM. Residues 308 to 321 lie on the Extracellular side of the membrane; the sequence is THVEERFGPEANKE. A helical transmembrane segment spans residues 322-342; sequence VLLACIGITSGVGRLIFGRVA. Position 343 (D343) is a topological domain, cytoplasmic. A helical membrane pass occupies residues 344–364; that stretch reads YVPGVNKVFLQVSSFMVIGVM. Residues 365–377 lie on the Extracellular side of the membrane; sequence SMMIPLCHVFGGL. Residues 378 to 400 traverse the membrane as a helical segment; the sequence is IAVCLLMGLFDGCFICIMAPIAF. Topologically, residues 401 to 411 are cytoplasmic; it reads ELVGSQNVSQA. Residues 412–432 traverse the membrane as a helical segment; it reads IGFLLGMMSIPMTVGPPIAGF. Topologically, residues 433-443 are extracellular; it reads LRDRLGSYDVA. Residues 444-464 traverse the membrane as a helical segment; sequence FYLAGIPPLIGGAVLCAIPWV. Over 465 to 505 the chain is Cytoplasmic; sequence EARRKRREAANTAENTEKMLESRSPPLEDTVCRTEEPESVI. The disordered stretch occupies residues 474-505; sequence ANTAENTEKMLESRSPPLEDTVCRTEEPESVI. Residues 494–505 show a composition bias toward basic and acidic residues; the sequence is TVCRTEEPESVI.

The protein belongs to the major facilitator superfamily. Monocarboxylate porter (TC 2.A.1.13) family.

The protein localises to the cell membrane. The protein resides in the basolateral cell membrane. It carries out the reaction L-tryptophan(in) = L-tryptophan(out). The catalysed reaction is L-tyrosine(in) = L-tyrosine(out). The enzyme catalyses L-phenylalanine(in) = L-phenylalanine(out). It catalyses the reaction 3,3',5-triiodo-L-thyronine(out) = 3,3',5-triiodo-L-thyronine(in). It carries out the reaction L-thyroxine(out) = L-thyroxine(in). Sodium- and proton-independent thyroid hormones and aromatic acids transporter. Mediates both uptake and efflux of 3,5,3'-triiodothyronine (T3) and 3,5,3',5'-tetraiodothyronine (T4) with high affinity, suggesting a role in the homeostasis of thyroid hormone levels. Responsible for low affinity bidirectional transport of the aromatic amino acids, such as phenylalanine, tyrosine, tryptophan and L-3,4-dihydroxyphenylalanine (L-dopa). Plays an important role in homeostasis of aromatic amino acids. This chain is Monocarboxylate transporter 10 (slc16a10), found in Danio rerio (Zebrafish).